Reading from the N-terminus, the 232-residue chain is Enolase-phosphatase E1 (232 aa).

This sequence belongs to the HAD-like hydrolase superfamily. MasA/MtnC family. In terms of assembly, monomer. It depends on Mg(2+) as a cofactor.

It catalyses the reaction 5-methylsulfanyl-2,3-dioxopentyl phosphate + H2O = 1,2-dihydroxy-5-(methylsulfanyl)pent-1-en-3-one + phosphate. Its pathway is amino-acid biosynthesis; L-methionine biosynthesis via salvage pathway; L-methionine from S-methyl-5-thio-alpha-D-ribose 1-phosphate: step 3/6. It participates in amino-acid biosynthesis; L-methionine biosynthesis via salvage pathway; L-methionine from S-methyl-5-thio-alpha-D-ribose 1-phosphate: step 4/6. Bifunctional enzyme that catalyzes the enolization of 2,3-diketo-5-methylthiopentyl-1-phosphate (DK-MTP-1-P) into the intermediate 2-hydroxy-3-keto-5-methylthiopentenyl-1-phosphate (HK-MTPenyl-1-P), which is then dephosphorylated to form the acireductone 1,2-dihydroxy-3-keto-5-methylthiopentene (DHK-MTPene). This Xanthomonas axonopodis pv. citri (strain 306) protein is Enolase-phosphatase E1.